Reading from the N-terminus, the 272-residue chain is Shikimate dehydrogenase (NADP(+)) (272 aa).

Residues 14-16 and T61 each bind shikimate; that span reads SKS. The Proton acceptor role is filled by K65. E77 lines the NADP(+) pocket. Residues N86 and D102 each contribute to the shikimate site. Residues 126–130, 149–154, and M213 each bind NADP(+); these read GAGGA and NRTYSR. Residue Y215 participates in shikimate binding. An NADP(+)-binding site is contributed by G237.

The protein belongs to the shikimate dehydrogenase family. Homodimer.

It carries out the reaction shikimate + NADP(+) = 3-dehydroshikimate + NADPH + H(+). The protein operates within metabolic intermediate biosynthesis; chorismate biosynthesis; chorismate from D-erythrose 4-phosphate and phosphoenolpyruvate: step 4/7. In terms of biological role, involved in the biosynthesis of the chorismate, which leads to the biosynthesis of aromatic amino acids. Catalyzes the reversible NADPH linked reduction of 3-dehydroshikimate (DHSA) to yield shikimate (SA). This chain is Shikimate dehydrogenase (NADP(+)), found in Enterobacter sp. (strain 638).